We begin with the raw amino-acid sequence, 271 residues long: MNSASREALAAARERLDALTDNTSVDAAKLAEELASVTALLDREVSLRRVLTDPAQSGESKAELAARLLGGQVGGETLDLVSGLVRSRWSQSRDLVDSVEELANTADLTAAQRGGNLDDVEDELFRFGRIVGSDKELRSALTSRTATASAKGELLRSLLGGKAQPVTERIIVRLVTQPRGRSLEAGLDSLSKLAAERRDRMVAVVTSAVPLSDRQKQRLGAALAKLYGRQMHLNLDVDPAVLGGISVRVGDEIINGTVAERLEEATRRMAG.

This sequence belongs to the ATPase delta chain family. As to quaternary structure, F-type ATPases have 2 components, F(1) - the catalytic core - and F(0) - the membrane proton channel. F(1) has five subunits: alpha(3), beta(3), gamma(1), delta(1), epsilon(1). F(0) has three main subunits: a(1), b(2) and c(10-14). The alpha and beta chains form an alternating ring which encloses part of the gamma chain. F(1) is attached to F(0) by a central stalk formed by the gamma and epsilon chains, while a peripheral stalk is formed by the delta and b chains.

The protein resides in the cell membrane. In terms of biological role, f(1)F(0) ATP synthase produces ATP from ADP in the presence of a proton or sodium gradient. F-type ATPases consist of two structural domains, F(1) containing the extramembraneous catalytic core and F(0) containing the membrane proton channel, linked together by a central stalk and a peripheral stalk. During catalysis, ATP synthesis in the catalytic domain of F(1) is coupled via a rotary mechanism of the central stalk subunits to proton translocation. This protein is part of the stalk that links CF(0) to CF(1). It either transmits conformational changes from CF(0) to CF(1) or is implicated in proton conduction. The protein is ATP synthase subunit delta of Streptomyces griseus subsp. griseus (strain JCM 4626 / CBS 651.72 / NBRC 13350 / KCC S-0626 / ISP 5235).